Here is a 187-residue protein sequence, read N- to C-terminus: Putative zinc finger protein 833 (187 aa).

6 consecutive C2H2-type zinc fingers follow at residues 10–32, 38–60, 66–88, 94–116, 122–144, and 150–172; these read YKCK…ERTH, YECN…ARIH, YICK…ENTH, CECK…ERIH, YKCK…KSTH, and YECK…EGVH.

The protein is Putative zinc finger protein 833 (ZNF833P) of Homo sapiens (Human).